The sequence spans 273 residues: NADPH-dependent 7-cyano-7-deazaguanine reductase (273 aa).

81–83 (VES) lines the substrate pocket. NADPH is bound at residue 83–84 (SK). Catalysis depends on cysteine 179, which acts as the Thioimide intermediate. Catalysis depends on aspartate 186, which acts as the Proton donor. Residue 218–219 (AE) coordinates substrate. 247–248 (RG) lines the NADPH pocket.

The protein belongs to the GTP cyclohydrolase I family. QueF type 2 subfamily. In terms of assembly, homodimer.

Its subcellular location is the cytoplasm. The enzyme catalyses 7-aminomethyl-7-carbaguanine + 2 NADP(+) = 7-cyano-7-deazaguanine + 2 NADPH + 3 H(+). Its pathway is tRNA modification; tRNA-queuosine biosynthesis. Catalyzes the NADPH-dependent reduction of 7-cyano-7-deazaguanine (preQ0) to 7-aminomethyl-7-deazaguanine (preQ1). In Rickettsia akari (strain Hartford), this protein is NADPH-dependent 7-cyano-7-deazaguanine reductase.